The primary structure comprises 525 residues: Putative ribose/galactose/methyl galactoside import ATP-binding protein (525 aa).

The interval 1–30 (MFGSATANPPAQRDLPSSDSDSPTPDAQPP) is disordered. Residues 14–25 (DLPSSDSDSPTP) show a composition bias toward low complexity. ABC transporter domains follow at residues 33 to 269 (LEIS…VGRE) and 279 to 523 (KPPG…SGHK). ATP is bound at residue 65-72 (GENGAGKS).

It belongs to the ABC transporter superfamily. Carbohydrate importer 2 (CUT2) (TC 3.A.1.2) family.

The protein localises to the cell inner membrane. It catalyses the reaction D-ribose(out) + ATP + H2O = D-ribose(in) + ADP + phosphate + H(+). The enzyme catalyses D-galactose(out) + ATP + H2O = D-galactose(in) + ADP + phosphate + H(+). Its function is as follows. Part of an ABC transporter complex involved in carbohydrate import. Could be involved in ribose, galactose and/or methyl galactoside import. Responsible for energy coupling to the transport system. In Pseudomonas savastanoi pv. phaseolicola (strain 1448A / Race 6) (Pseudomonas syringae pv. phaseolicola (strain 1448A / Race 6)), this protein is Putative ribose/galactose/methyl galactoside import ATP-binding protein.